The chain runs to 537 residues: Eukaryotic translation initiation factor 3 subunit L (537 aa).

The 213-residue stretch at Thr300–His512 folds into the PCI domain.

The protein belongs to the eIF-3 subunit L family. As to quaternary structure, component of the eukaryotic translation initiation factor 3 (eIF-3) complex.

The protein resides in the cytoplasm. Its function is as follows. Component of the eukaryotic translation initiation factor 3 (eIF-3) complex, which is involved in protein synthesis of a specialized repertoire of mRNAs and, together with other initiation factors, stimulates binding of mRNA and methionyl-tRNAi to the 40S ribosome. The eIF-3 complex specifically targets and initiates translation of a subset of mRNAs involved in cell proliferation. The sequence is that of Eukaryotic translation initiation factor 3 subunit L from Culex quinquefasciatus (Southern house mosquito).